Consider the following 776-residue polypeptide: Disintegrin and metalloproteinase domain-containing protein 28 (776 aa).

The signal sequence occupies residues 1–19; that stretch reads MLQALLTVSLLLSPVPVSA. Residues 20-193 constitute a propeptide that is removed on maturation; that stretch reads IKELPGVKKY…IARPATRLVK (174 aa). Positions 168 to 175 match the Cysteine switch motif; it reads STCGTDGV. C170 serves as a coordination point for Zn(2+). Residues 194–666 are Extracellular-facing; the sequence is LNDGKVQKHE…CDDSSVVFYF (473 aa). One can recognise a Peptidase M12B domain in the interval 204-400; that stretch reads KYIEYYLVLD…KLSNCLFNAP (197 aa). N268 and N275 each carry an N-linked (GlcNAc...) asparagine glycan. 4 disulfides stabilise this stretch: C315/C395, C355/C379, C357/C362, and C466/C486. H340 serves as a coordination point for Zn(2+). Residue E341 is part of the active site. 2 residues coordinate Zn(2+): H344 and H350. N-linked (GlcNAc...) asparagine glycosylation is present at N352. The 87-residue stretch at 408–494 folds into the Disintegrin domain; that stretch reads TPICGNQMVE…NCPDDRFRAN (87 aa). N558, N603, and N629 each carry an N-linked (GlcNAc...) asparagine glycan. The EGF-like domain maps to 626 to 658; it reads KSTNCSSKCKGHAVCDHELQCQCEEGWSPPDCD. Disulfide bonds link C630–C640, C634–C646, and C648–C657. Residues 667–687 form a helical membrane-spanning segment; that stretch reads SIVVAVLFPVAVISLVVAIVI. Topologically, residues 688–776 are cytoplasmic; the sequence is RQQSSREKQK…SSFLDSNPKA (89 aa). A compositionally biased stretch (basic and acidic residues) spans 691–701; the sequence is SSREKQKKDQR. Disordered stretches follow at residues 691–728 and 746–776; these read SSRE…PQEM and PASF…NPKA. Residues 709–718 are compositionally biased toward basic residues; it reads RPHKQKRKPQ.

Requires Zn(2+) as cofactor. In terms of processing, pro-domain removal and maturation may be, at least in part, autocatalytic. As to expression, expressed at high levels in epididymis and at lower levels in lung.

The protein localises to the membrane. Its function is as follows. May play a role in the adhesive and proteolytic events that occur during lymphocyte emigration or may function in ectodomain shedding of lymphocyte surface target proteins, such as FASL and CD40L. May be involved in sperm maturation. This Macaca fascicularis (Crab-eating macaque) protein is Disintegrin and metalloproteinase domain-containing protein 28 (ADAM28).